The following is a 307-amino-acid chain: Agmatinase (307 aa).

Positions 128, 151, 153, 155, 232, and 234 each coordinate Mn(2+).

Belongs to the arginase family. Agmatinase subfamily. Requires Mn(2+) as cofactor.

It carries out the reaction agmatine + H2O = urea + putrescine. It participates in amine and polyamine biosynthesis; putrescine biosynthesis via agmatine pathway; putrescine from agmatine: step 1/1. Catalyzes the formation of putrescine from agmatine. The protein is Agmatinase of Photorhabdus laumondii subsp. laumondii (strain DSM 15139 / CIP 105565 / TT01) (Photorhabdus luminescens subsp. laumondii).